Consider the following 124-residue polypeptide: Small ribosomal subunit protein uS12 (124 aa).

At Asp89 the chain carries 3-methylthioaspartic acid.

This sequence belongs to the universal ribosomal protein uS12 family. In terms of assembly, part of the 30S ribosomal subunit. Contacts proteins S8 and S17. May interact with IF1 in the 30S initiation complex.

With S4 and S5 plays an important role in translational accuracy. In terms of biological role, interacts with and stabilizes bases of the 16S rRNA that are involved in tRNA selection in the A site and with the mRNA backbone. Located at the interface of the 30S and 50S subunits, it traverses the body of the 30S subunit contacting proteins on the other side and probably holding the rRNA structure together. The combined cluster of proteins S8, S12 and S17 appears to hold together the shoulder and platform of the 30S subunit. This is Small ribosomal subunit protein uS12 from Buchnera aphidicola subsp. Schizaphis graminum (strain Sg).